Consider the following 518-residue polypeptide: Membrane-bound lytic murein transglycosylase F (518 aa).

An N-terminal signal peptide occupies residues 1-21 (MKKLKINYLFIGILALLLAVA). The interval 22–269 (LWPSIPWFGK…RIEEKYLGHG (248 aa)) is non-LT domain. An LT domain region spans residues 270–518 (DDFDYVDTRT…SRKGSEEKQN (249 aa)). Glutamate 314 is an active-site residue.

It in the N-terminal section; belongs to the bacterial solute-binding protein 3 family. This sequence in the C-terminal section; belongs to the transglycosylase Slt family.

The protein resides in the cell outer membrane. It carries out the reaction Exolytic cleavage of the (1-&gt;4)-beta-glycosidic linkage between N-acetylmuramic acid (MurNAc) and N-acetylglucosamine (GlcNAc) residues in peptidoglycan, from either the reducing or the non-reducing ends of the peptidoglycan chains, with concomitant formation of a 1,6-anhydrobond in the MurNAc residue.. In terms of biological role, murein-degrading enzyme that degrades murein glycan strands and insoluble, high-molecular weight murein sacculi, with the concomitant formation of a 1,6-anhydromuramoyl product. Lytic transglycosylases (LTs) play an integral role in the metabolism of the peptidoglycan (PG) sacculus. Their lytic action creates space within the PG sacculus to allow for its expansion as well as for the insertion of various structures such as secretion systems and flagella. This Shigella sonnei (strain Ss046) protein is Membrane-bound lytic murein transglycosylase F.